Consider the following 300-residue polypeptide: Ribosomal protein L11 methyltransferase (300 aa).

S-adenosyl-L-methionine-binding residues include Thr-152, Gly-173, Asp-195, and Asn-234.

Belongs to the methyltransferase superfamily. PrmA family.

It is found in the cytoplasm. The enzyme catalyses L-lysyl-[protein] + 3 S-adenosyl-L-methionine = N(6),N(6),N(6)-trimethyl-L-lysyl-[protein] + 3 S-adenosyl-L-homocysteine + 3 H(+). Methylates ribosomal protein L11. This chain is Ribosomal protein L11 methyltransferase, found in Cupriavidus necator (strain ATCC 17699 / DSM 428 / KCTC 22496 / NCIMB 10442 / H16 / Stanier 337) (Ralstonia eutropha).